We begin with the raw amino-acid sequence, 533 residues long: uncharacterized protein (533 aa).

A disordered region spans residues 1–26; sequence MKRFFSKLFSKSPTSGRVPSPDSDYS. Phosphoserine is present on residues Ser-20 and Ser-23. Tyr-25 bears the Phosphotyrosine mark. Ser-26 bears the Phosphoserine mark. Helical transmembrane passes span 178-198, 213-230, 242-264, 274-296, 313-333, 353-373, 394-414, 435-455, 466-486, and 495-515; these read ILAV…HILI, YMRV…FEAL, PITY…LVWH, APVA…ICFS, LSPM…EWAA, SILL…AVAS, RVAY…IFCF, IFPI…GGGL, GLIS…FVVV, and IWCG…TVLF.

Belongs to the multi antimicrobial extrusion (MATE) (TC 2.A.66.1) family.

It is found in the vacuole membrane. This is an uncharacterized protein from Schizosaccharomyces pombe (strain 972 / ATCC 24843) (Fission yeast).